Reading from the N-terminus, the 620-residue chain is Chaperone protein HscA homolog (620 aa).

It belongs to the heat shock protein 70 family.

Functionally, chaperone involved in the maturation of iron-sulfur cluster-containing proteins. Has a low intrinsic ATPase activity which is markedly stimulated by HscB. This Shewanella sp. (strain ANA-3) protein is Chaperone protein HscA homolog.